A 144-amino-acid polypeptide reads, in one-letter code: Superoxide dismutase [Mn], mitochondrial (144 aa).

The Mn(2+) site is built by His10, His58, and Asp143.

This sequence belongs to the iron/manganese superoxide dismutase family. Homotetramer. Mn(2+) serves as cofactor.

Its subcellular location is the mitochondrion matrix. It carries out the reaction 2 superoxide + 2 H(+) = H2O2 + O2. Its function is as follows. Destroys superoxide anion radicals which are normally produced within the cells and which are toxic to biological systems. This Eptatretus stoutii (Pacific hagfish) protein is Superoxide dismutase [Mn], mitochondrial.